Reading from the N-terminus, the 198-residue chain is RNA-free ribonuclease P (198 aa).

The protein belongs to the HARP family.

The enzyme catalyses Endonucleolytic cleavage of RNA, removing 5'-extranucleotides from tRNA precursor.. Functionally, RNA-free RNase P that catalyzes the removal of the 5'-leader sequence from pre-tRNA to produce the mature 5'-terminus. The chain is RNA-free ribonuclease P from Thermococcus kodakarensis (strain ATCC BAA-918 / JCM 12380 / KOD1) (Pyrococcus kodakaraensis (strain KOD1)).